A 305-amino-acid chain; its full sequence is Ribosomal RNA small subunit methyltransferase H (305 aa).

Residues 33–35 (GGH), aspartate 52, aspartate 97, and glutamine 104 each bind S-adenosyl-L-methionine.

This sequence belongs to the methyltransferase superfamily. RsmH family.

The protein resides in the cytoplasm. It catalyses the reaction cytidine(1402) in 16S rRNA + S-adenosyl-L-methionine = N(4)-methylcytidine(1402) in 16S rRNA + S-adenosyl-L-homocysteine + H(+). Functionally, specifically methylates the N4 position of cytidine in position 1402 (C1402) of 16S rRNA. This chain is Ribosomal RNA small subunit methyltransferase H, found in Campylobacter lari (strain RM2100 / D67 / ATCC BAA-1060).